We begin with the raw amino-acid sequence, 24 residues long: U1-plectoxin-Pt1e (24 aa).

A disulfide bond links Cys4 and Cys18.

This sequence belongs to the neurotoxin 02 (plectoxin) family. 02 (plectoxin) subfamily. In terms of processing, contains 5 disulfide bonds. As to expression, expressed by the venom gland.

It is found in the secreted. Functionally, potent toxin that may paralyze and/or kill insect pests such as H.virescens (lepidoptera), S.exigua (beet armyworm) and M.sexta (tobacco hornworm). The chain is U1-plectoxin-Pt1e from Plectreurys tristis (Spider).